The following is a 357-amino-acid chain: DNA integrity scanning protein DisA (357 aa).

Residues 3-141 (RPTLRETVAR…GGERHVVADS (139 aa)) enclose the DAC domain. ATP is bound by residues Gly70, Leu88, and 101–105 (TRHRS).

It belongs to the DisA family. Homooctamer. The cofactor is Mg(2+).

The enzyme catalyses 2 ATP = 3',3'-c-di-AMP + 2 diphosphate. Functionally, participates in a DNA-damage check-point. DisA forms globular foci that rapidly scan along the chromosomes searching for lesions. Its function is as follows. Also has diadenylate cyclase activity, catalyzing the condensation of 2 ATP molecules into cyclic di-AMP (c-di-AMP). c-di-AMP likely acts as a signaling molecule that may couple DNA integrity with a cellular process. The sequence is that of DNA integrity scanning protein DisA from Mycolicibacterium paratuberculosis (strain ATCC BAA-968 / K-10) (Mycobacterium paratuberculosis).